A 527-amino-acid chain; its full sequence is MSMQTEQELVALCLALIKDQDSLSAAEKKLTKTTPVSALKPREIDTIRKRSRAGLTHSANVLFDPLGHRAPRAGAVYTPAPIVRSMMTWLAAQGSPARIVDPGAGSGRFILAAGEAFPDAQLVAVEMDPLAALMLRANLSARGWTDRATVMVKDYREVKLPPCAGITAFIGNPPYVRHHDIGEDWKAWYASNFAGYGIKASALAGLHLHFFLQTRLLAKAGDVGAFITSAEWMDVNYGSALRRLLLDELGGIALHVLEPTVEAFPGTATTAAIACFRVGETARPVRVRFIDELTNLNGLTKGTDIPREQLQAASRWSIIVRPSAPAMAGDIELGELFRVHRGQVTGANGIWIAGEHAQGLPDRVKMPAVTKAKDLIQAGAHLNSAEVLRRVIDLPTDLDDFTKEERRRISSFLSWAKLHGADQSYIAQHRRAWWSVGLKAPAPILCTYMARRPPQFTLNACDARHINIAHGLYPREPLAAGIMASLVTWLNKNINTGSGRTYAGGLTKFEPKEIERLRIPSLENLHA.

This sequence belongs to the N(4)/N(6)-methyltransferase family.

It carries out the reaction a 2'-deoxyadenosine in DNA + S-adenosyl-L-methionine = an N(6)-methyl-2'-deoxyadenosine in DNA + S-adenosyl-L-homocysteine + H(+). Functionally, a gamma subtype methylase that recognizes the double-stranded sequence 5'-GTCGAC-3', possibly methylates A-5 on both strands, and protects the DNA from cleavage by the XamI endonuclease. The polypeptide is Type II methyltransferase M.XamI (Xanthomonas campestris pv. amaranthicola).